The primary structure comprises 1035 residues: Probable LRR receptor-like serine/threonine-protein kinase At1g53440 (1035 aa).

Positions 1 to 26 (MGFFFSTRKGLLLIIFICLDIFGSNA) are cleaved as a signal peptide. Topologically, residues 27–607 (QLLPEDEVQT…VDTGKPLSNG (581 aa)) are extracellular. Residues Asn46, Asn75, Asn83, and Asn110 are each glycosylated (N-linked (GlcNAc...) asparagine). 7 LRR repeats span residues 87 to 110 (VCRVTNIQLRGFNLRGIIPPEFGN), 111 to 135 (LTRLTEIDLVLNFLSGTIPTTLSQI), 137 to 158 (LEILAVTGNRLSGPFPPQLGQI), 160 to 182 (TLTDVIMESNLFTGQLPPNLGNL), 183 to 206 (RSLKRLLISSNNITGRIPESLSNL), 208 to 232 (NLTNFRIDGNSLSGKIPDFIGNWTR), and 234 to 254 (VRLDLQGTSMEGPIPASISNL). N-linked (GlcNAc...) asparagine glycosylation is found at Asn194, Asn208, and Asn229. Residues Asn256 and Asn277 are each glycosylated (N-linked (GlcNAc...) asparagine). 4 LRR repeats span residues 278–302 (MTNMERLVLRNCLIREPIPEYIGTS), 303–326 (MTMLKLLDLSSNMLNGTIPDTFRS), 328–349 (NAFNFMYLNNNSLTGPVPQFIL), and 350–372 (DSKQNIDLSYNNFTQPPTLSCNQ). 6 N-linked (GlcNAc...) asparagine glycosylation sites follow: Asn317, Asn337, Asn361, Asn386, Asn469, and Asn559. A helical transmembrane segment spans residues 608–628 (VVAGIVIAACVAFGLLVLVIL). The Cytoplasmic segment spans residues 629-1035 (RLTGYLGGKE…LDDLTDVEIE (407 aa)). Thr656 is modified (phosphothreonine). Residues 667 to 948 (FDPENKIGEG…QGKIKVQPPL (282 aa)) form the Protein kinase domain. ATP is bound by residues 673–681 (IGEGGFGPV) and Lys695. Tyr740 carries the post-translational modification Phosphotyrosine. Residue Asp793 is the Proton acceptor of the active site. A Phosphoserine modification is found at Ser826. A phosphothreonine mark is found at Thr827 and Thr832. Tyr840 is modified (phosphotyrosine). The tract at residues 969 to 1035 (LSQDSESQVS…LDDLTDVEIE (67 aa)) is disordered. The span at 972–981 (DSESQVSTYT) shows a compositional bias: polar residues. The segment covering 1009 to 1023 (SLLQQEEGNSSSSSR) has biased composition (low complexity).

It belongs to the protein kinase superfamily. Ser/Thr protein kinase family.

The protein resides in the cell membrane. It carries out the reaction L-seryl-[protein] + ATP = O-phospho-L-seryl-[protein] + ADP + H(+). The catalysed reaction is L-threonyl-[protein] + ATP = O-phospho-L-threonyl-[protein] + ADP + H(+). The protein is Probable LRR receptor-like serine/threonine-protein kinase At1g53440 of Arabidopsis thaliana (Mouse-ear cress).